Consider the following 445-residue polypeptide: Na(+)-translocating NADH-quinone reductase subunit A (445 aa).

It belongs to the NqrA family. As to quaternary structure, composed of six subunits; NqrA, NqrB, NqrC, NqrD, NqrE and NqrF.

The enzyme catalyses a ubiquinone + n Na(+)(in) + NADH + H(+) = a ubiquinol + n Na(+)(out) + NAD(+). Functionally, NQR complex catalyzes the reduction of ubiquinone-1 to ubiquinol by two successive reactions, coupled with the transport of Na(+) ions from the cytoplasm to the periplasm. NqrA to NqrE are probably involved in the second step, the conversion of ubisemiquinone to ubiquinol. The sequence is that of Na(+)-translocating NADH-quinone reductase subunit A from Teredinibacter turnerae (strain ATCC 39867 / T7901).